Consider the following 268-residue polypeptide: uncharacterized protein (268 aa).

This is an uncharacterized protein from Haemophilus influenzae (strain ATCC 51907 / DSM 11121 / KW20 / Rd).